Consider the following 462-residue polypeptide: MFIINKNLPHFKNDFSDYYSKLDNDLSISSPKFESPVLSQPKVKPLSHDIISICSTKITPLDDFNFLKVISKGGFGKVYLAENKITKKTVAIKVIKKSDTIKKMMVDQVNIEKTILSNYKCNFIVELFSSFQTDKKLFFVMEFLNGGDCASLLRSFNNNMPEDLTKNIIAQIIICLEYLHNHGIIHRDLKPDNILIDSNGHIKLADFGLSKFDFVDESCNIKILKNSFTLYNTNNNNTTENQKILGTPYYIPPEVILGKGYGKTIDWWSLGIILYEFLIGYPPFQEDEPNESINPKSDNDEKNVRIIFNKITNHKKKLYFPKKLYPVAIDLIEKLLDPNPSVRLGANGVDEVKCHPFFSEINWKIYEDQKVLVFQPFVENDCDTSYFIERKEENNKNKINDDIDSLILNQNNQNIYKNNNNNNNNNNNNNNNNNNNNNNDDNDDENNIIDQNLFIDFDFPTY.

The 295-residue stretch at 64–358 (FNFLKVISKG…VDEVKCHPFF (295 aa)) folds into the Protein kinase domain. ATP-binding positions include 70 to 78 (ISKGGFGKV) and K93. Catalysis depends on D188, which acts as the Proton acceptor. One can recognise an AGC-kinase C-terminal domain in the interval 359-462 (SEINWKIYED…LFIDFDFPTY (104 aa)). Positions 414–439 (NIYKNNNNNNNNNNNNNNNNNNNNNN) are enriched in low complexity. The interval 414-447 (NIYKNNNNNNNNNNNNNNNNNNNNNNDDNDDENN) is disordered.

The protein belongs to the protein kinase superfamily. AGC Ser/Thr protein kinase family.

It catalyses the reaction L-seryl-[protein] + ATP = O-phospho-L-seryl-[protein] + ADP + H(+). It carries out the reaction L-threonyl-[protein] + ATP = O-phospho-L-threonyl-[protein] + ADP + H(+). The chain is Probable serine/threonine-protein kinase DDB_G0286841 from Dictyostelium discoideum (Social amoeba).